The chain runs to 328 residues: D-cysteine desulfhydrase (328 aa).

An N6-(pyridoxal phosphate)lysine modification is found at K51.

This sequence belongs to the ACC deaminase/D-cysteine desulfhydrase family. In terms of assembly, homodimer. The cofactor is pyridoxal 5'-phosphate.

The catalysed reaction is D-cysteine + H2O = hydrogen sulfide + pyruvate + NH4(+) + H(+). Functionally, catalyzes the alpha,beta-elimination reaction of D-cysteine and of several D-cysteine derivatives. It could be a defense mechanism against D-cysteine. The sequence is that of D-cysteine desulfhydrase from Salmonella agona (strain SL483).